We begin with the raw amino-acid sequence, 360 residues long: Phospho-N-acetylmuramoyl-pentapeptide-transferase (360 aa).

The next 10 membrane-spanning stretches (helical) occupy residues valine 18–leucine 38, threonine 73–leucine 93, serine 94–valine 114, tyrosine 134–glycine 154, leucine 168–serine 188, glycine 199–threonine 219, leucine 239–tyrosine 259, valine 263–leucine 283, leucine 288–valine 308, and valine 338–lysine 358.

The protein belongs to the glycosyltransferase 4 family. MraY subfamily. The cofactor is Mg(2+).

Its subcellular location is the cell inner membrane. It catalyses the reaction UDP-N-acetyl-alpha-D-muramoyl-L-alanyl-gamma-D-glutamyl-meso-2,6-diaminopimeloyl-D-alanyl-D-alanine + di-trans,octa-cis-undecaprenyl phosphate = di-trans,octa-cis-undecaprenyl diphospho-N-acetyl-alpha-D-muramoyl-L-alanyl-D-glutamyl-meso-2,6-diaminopimeloyl-D-alanyl-D-alanine + UMP. The protein operates within cell wall biogenesis; peptidoglycan biosynthesis. Its function is as follows. Catalyzes the initial step of the lipid cycle reactions in the biosynthesis of the cell wall peptidoglycan: transfers peptidoglycan precursor phospho-MurNAc-pentapeptide from UDP-MurNAc-pentapeptide onto the lipid carrier undecaprenyl phosphate, yielding undecaprenyl-pyrophosphoryl-MurNAc-pentapeptide, known as lipid I. This is Phospho-N-acetylmuramoyl-pentapeptide-transferase from Colwellia psychrerythraea (strain 34H / ATCC BAA-681) (Vibrio psychroerythus).